A 109-amino-acid chain; its full sequence is Large ribosomal subunit protein uL22 (109 aa).

Belongs to the universal ribosomal protein uL22 family. Part of the 50S ribosomal subunit.

In terms of biological role, this protein binds specifically to 23S rRNA; its binding is stimulated by other ribosomal proteins, e.g. L4, L17, and L20. It is important during the early stages of 50S assembly. It makes multiple contacts with different domains of the 23S rRNA in the assembled 50S subunit and ribosome. The globular domain of the protein is located near the polypeptide exit tunnel on the outside of the subunit, while an extended beta-hairpin is found that lines the wall of the exit tunnel in the center of the 70S ribosome. This Paraburkholderia phymatum (strain DSM 17167 / CIP 108236 / LMG 21445 / STM815) (Burkholderia phymatum) protein is Large ribosomal subunit protein uL22.